Reading from the N-terminus, the 207-residue chain is Large ribosomal subunit protein uL4 (207 aa).

Positions 50 to 75 are disordered; that stretch reads KTKTRSEVAGSGKKPFKQKGTGNARQ.

Belongs to the universal ribosomal protein uL4 family. As to quaternary structure, part of the 50S ribosomal subunit.

In terms of biological role, one of the primary rRNA binding proteins, this protein initially binds near the 5'-end of the 23S rRNA. It is important during the early stages of 50S assembly. It makes multiple contacts with different domains of the 23S rRNA in the assembled 50S subunit and ribosome. Functionally, forms part of the polypeptide exit tunnel. In Pelobacter propionicus (strain DSM 2379 / NBRC 103807 / OttBd1), this protein is Large ribosomal subunit protein uL4.